A 686-amino-acid polypeptide reads, in one-letter code: Hexamerin 70c (686 aa).

Residues 1–19 (MLSKVVLLVALAAICGAQG) form the signal peptide. The 124-residue stretch at 32 to 155 (FLHKQKKIFD…IAVLYRPDTK (124 aa)) folds into the Hemocyanin N-terminal domain. The Hemocyanin middle domain maps to 161-431 (AIYEIYPNYF…MLYQNILSYF (271 aa)). N-linked (GlcNAc...) asparagine glycans are attached at residues N205 and N662. In terms of domain architecture, Hemocyanin C-terminal spans 440–676 (QYSQSELQMP…NMYFKDVFIY (237 aa)).

The protein belongs to the hemocyanin/hexamerin family. As to quaternary structure, probable homohexamer. In terms of tissue distribution, expressed in the fat body and secreted into the hemolymph (at protein level). Present in trophocytes and oenocytes of the fat body (at protein level). Not expressed in ovary or testis.

The protein localises to the secreted. Its subcellular location is the nucleus. It is found in the cytoplasm. The protein resides in the cytoplasmic granule. In terms of biological role, storage protein that may function as a nutrient supply to compensate for lack of dietary proteins during metamorphosis and egg production. The protein is Hexamerin 70c of Apis mellifera (Honeybee).